The primary structure comprises 511 residues: Bifunctional purine biosynthesis protein PurH (511 aa).

The MGS-like domain maps to 1-145; sequence MKKRALVSVS…KNHKFVSVIV (145 aa).

The protein belongs to the PurH family.

It carries out the reaction (6R)-10-formyltetrahydrofolate + 5-amino-1-(5-phospho-beta-D-ribosyl)imidazole-4-carboxamide = 5-formamido-1-(5-phospho-D-ribosyl)imidazole-4-carboxamide + (6S)-5,6,7,8-tetrahydrofolate. It catalyses the reaction IMP + H2O = 5-formamido-1-(5-phospho-D-ribosyl)imidazole-4-carboxamide. It functions in the pathway purine metabolism; IMP biosynthesis via de novo pathway; 5-formamido-1-(5-phospho-D-ribosyl)imidazole-4-carboxamide from 5-amino-1-(5-phospho-D-ribosyl)imidazole-4-carboxamide (10-formyl THF route): step 1/1. It participates in purine metabolism; IMP biosynthesis via de novo pathway; IMP from 5-formamido-1-(5-phospho-D-ribosyl)imidazole-4-carboxamide: step 1/1. This chain is Bifunctional purine biosynthesis protein PurH, found in Bacillus cereus (strain ATCC 14579 / DSM 31 / CCUG 7414 / JCM 2152 / NBRC 15305 / NCIMB 9373 / NCTC 2599 / NRRL B-3711).